A 947-amino-acid chain; its full sequence is MAEDLDKPLLDPDTFNRKGIDLGILPLEEVFEYLRTSPQGLLSGDAEERLKIFGPNRLEEKQENRFVKFLGFMWNPLSWVMEAAALMAIALANSQSLGPDWEDFTGIVCLLLINATISFFEENNAGNAAAALMARLALKTRVLRDGQWQEQDASILVPGDIISIKLGDIIPADARLLEGDPLKIDQSVLTGESLPVTKKKGEQVFSGSTCKQGEIEAVVIATGSTTFFGKTARLVDSTDVTGHFQQVLTSIGNFCICSIAVGMVLEIIIMFPVQHRSYRIGINNLLVLLIGGIPIAMPTVLSVTLAIGSHRLSQQGAITKRMTAIEEMAGMDVLCCDKTGTLTLNSLTVDKNLIEVFVDYMDKDTILLLAGRASRLENQDAIDAAIVSMLADPREARANIREIHFLPFNPVDKRTAITYIDSDGKWYRATKGAPEQVLNLCQQKNEIAQRVYAIIDRFAEKGLRSLAVAYQEIPEKSNNSPGGPWRFCGLLPLFDPPRHDSGETILRALSLGVCVKMITGDQLAIAKETGRRLGMGTNMYPSSSLLGHNNDEHEAIPVDELIEMADGFAGVFPEHKYEIVKILQEMKHVVGMTGDGVNDAPALKKADIGIAVADATDAARSSADIVLTDPGLSVIISAVLTSRAIFQRMRNYTVYAVSITIRIVLGFTLLALIWEYDFPPFMVLIIAILNDGTIMTISKDRVRPSPTPESWKLNQIFATGIVIGTYLALVTVLFYWIIVSTTFFEKHFHVKSIANNSEQVSSAMYLQVSIISQALIFVTRSRGWSFFERPGTLLIFAFILAQLAATLIAVYANISFAKITGIGWRWAGVIWLYSLIFYIPLDVIKFVFHYALSGEAWNLVLDRKTAFTYKKDYGKDDGSPNVTISQRSRSAEELRGSRSRASWIAEQTRRRAEIARLLEVHSVSRHLESVIKLKQIDQRMIRAAHTV.

Residues 1–69 lie on the Cytoplasmic side of the membrane; sequence MAEDLDKPLL…EKQENRFVKF (69 aa). A helical transmembrane segment spans residues 70–89; that stretch reads LGFMWNPLSWVMEAAALMAI. Residues 90–101 are Extracellular-facing; that stretch reads ALANSQSLGPDW. A helical membrane pass occupies residues 102-122; the sequence is EDFTGIVCLLLINATISFFEE. The Cytoplasmic portion of the chain corresponds to 123 to 251; the sequence is NNAGNAAAAL…GHFQQVLTSI (129 aa). The helical transmembrane segment at 252–272 threads the bilayer; sequence GNFCICSIAVGMVLEIIIMFP. Residues 273–281 are Extracellular-facing; the sequence is VQHRSYRIG. A helical transmembrane segment spans residues 282-299; sequence INNLLVLLIGGIPIAMPT. Over 300–650 the chain is Cytoplasmic; the sequence is VLSVTLAIGS…TSRAIFQRMR (351 aa). Aspartate 337 acts as the 4-aspartylphosphate intermediate in catalysis. Residues aspartate 595 and aspartate 599 each contribute to the Mg(2+) site. Residues 651–672 form a helical membrane-spanning segment; that stretch reads NYTVYAVSITIRIVLGFTLLAL. The Extracellular portion of the chain corresponds to 673–677; sequence IWEYD. The helical transmembrane segment at 678-700 threads the bilayer; sequence FPPFMVLIIAILNDGTIMTISKD. Residues 701–716 are Cytoplasmic-facing; that stretch reads RVRPSPTPESWKLNQI. The chain crosses the membrane as a helical span at residues 717 to 737; it reads FATGIVIGTYLALVTVLFYWI. At 738-758 the chain is on the extracellular side; the sequence is IVSTTFFEKHFHVKSIANNSE. A helical transmembrane segment spans residues 759–779; sequence QVSSAMYLQVSIISQALIFVT. Residues 780–791 are Cytoplasmic-facing; sequence RSRGWSFFERPG. The chain crosses the membrane as a helical span at residues 792 to 812; sequence TLLIFAFILAQLAATLIAVYA. Over 813–820 the chain is Extracellular; the sequence is NISFAKIT. Residues 821–841 form a helical membrane-spanning segment; the sequence is GIGWRWAGVIWLYSLIFYIPL. Over 842–947 the chain is Cytoplasmic; the sequence is DVIKFVFHYA…QRMIRAAHTV (106 aa). Phosphoserine occurs at positions 897 and 929. Threonine 946 carries the post-translational modification Phosphothreonine.

The protein belongs to the cation transport ATPase (P-type) (TC 3.A.3) family. Type IIIA subfamily. As to expression, found primarily in developing seeds. Expressed in guard cells, mesophyll cells, leaves and roots.

It is found in the membrane. The catalysed reaction is ATP + H2O + H(+)(in) = ADP + phosphate + 2 H(+)(out). The plasma membrane H(+) ATPase of plants and fungi generates a proton gradient that drives the active transport of nutrients by H(+)-symport. The resulting external acidification and/or internal alkinization may mediate growth responses. The chain is ATPase 10, plasma membrane-type (AHA10) from Arabidopsis thaliana (Mouse-ear cress).